The following is a 145-amino-acid chain: uncharacterized protein (145 aa).

Helical transmembrane passes span 3-23 (VGII…GIGG), 83-103 (YVID…YLVP), and 105-125 (LSLL…MLWI).

The protein localises to the cell membrane. This is an uncharacterized protein from Methanocaldococcus jannaschii (strain ATCC 43067 / DSM 2661 / JAL-1 / JCM 10045 / NBRC 100440) (Methanococcus jannaschii).